Consider the following 249-residue polypeptide: Indole-3-glycerol phosphate synthase (249 aa).

This sequence belongs to the TrpC family.

It carries out the reaction 1-(2-carboxyphenylamino)-1-deoxy-D-ribulose 5-phosphate + H(+) = (1S,2R)-1-C-(indol-3-yl)glycerol 3-phosphate + CO2 + H2O. Its pathway is amino-acid biosynthesis; L-tryptophan biosynthesis; L-tryptophan from chorismate: step 4/5. The sequence is that of Indole-3-glycerol phosphate synthase from Pyrobaculum arsenaticum (strain DSM 13514 / JCM 11321 / PZ6).